The sequence spans 569 residues: Sulfite reductase [NADPH] hemoprotein beta-component (569 aa).

[4Fe-4S] cluster is bound by residues Cys-433, Cys-439, Cys-478, and Cys-482. Residue Cys-482 coordinates siroheme.

This sequence belongs to the nitrite and sulfite reductase 4Fe-4S domain family. In terms of assembly, alpha(8)-beta(8). The alpha component is a flavoprotein, the beta component is a hemoprotein. The cofactor is siroheme. [4Fe-4S] cluster is required as a cofactor.

The catalysed reaction is hydrogen sulfide + 3 NADP(+) + 3 H2O = sulfite + 3 NADPH + 4 H(+). It functions in the pathway sulfur metabolism; hydrogen sulfide biosynthesis; hydrogen sulfide from sulfite (NADPH route): step 1/1. Component of the sulfite reductase complex that catalyzes the 6-electron reduction of sulfite to sulfide. This is one of several activities required for the biosynthesis of L-cysteine from sulfate. In Blochmanniella floridana, this protein is Sulfite reductase [NADPH] hemoprotein beta-component.